The chain runs to 503 residues: Arabinose import ATP-binding protein AraG 1 (503 aa).

ABC transporter domains are found at residues 5–240 and 251–497; these read LRFD…MVGR and RALG…LPQT. 37 to 44 is an ATP binding site; that stretch reads GENGAGKS.

Belongs to the ABC transporter superfamily. Arabinose importer (TC 3.A.1.2.2) family. The complex is composed of two ATP-binding proteins (AraG), two transmembrane proteins (AraH) and a solute-binding protein (AraF).

It is found in the cell inner membrane. The catalysed reaction is L-arabinose(out) + ATP + H2O = L-arabinose(in) + ADP + phosphate + H(+). Its function is as follows. Part of the ABC transporter complex AraFGH involved in arabinose import. Responsible for energy coupling to the transport system. The chain is Arabinose import ATP-binding protein AraG 1 from Burkholderia ambifaria (strain ATCC BAA-244 / DSM 16087 / CCUG 44356 / LMG 19182 / AMMD) (Burkholderia cepacia (strain AMMD)).